Reading from the N-terminus, the 454-residue chain is F-box/WD-40 repeat-containing protein At3g52030 (454 aa).

In terms of domain architecture, F-box spans 20-66 (PTSIESLDADILCIIFSFLDLFDLVHCTVVCNSWNAVIKRLKLLQAS). WD repeat units follow at residues 85–116 (DRPAEIDVEDFAMKHHKMALLRGRIEIERWEA), 117–153 (HSHRVSQCRMKKGLLLTGVGDKVMRLWSLKSYKCMEE), 170–214 (SKKL…SIFP), 215–255 (SRAG…CSQI), 258–296 (TQGGPITCLSLSDNQLFLSGSSLGRVTVSDPLMDQPVAT), 301–340 (ITAGGIQTICFNQGTNLAFIGTTGGYVSCWDLRKMDRLWE), 343–383 (VSPN…VLSR), and 422–454 (KVRPQISCIAMGMKKMVTAHNGKCISVWKFNLS).

The sequence is that of F-box/WD-40 repeat-containing protein At3g52030 from Arabidopsis thaliana (Mouse-ear cress).